The chain runs to 814 residues: Probable G-protein coupled receptor 156 (814 aa).

Residues 1–47 (MEPEINCSELCDSFPGQELDRRPLHDLCKTTITSSHHSSKTISSLSP) are Extracellular-facing. Asparagine 6 carries an N-linked (GlcNAc...) asparagine glycan. A helical transmembrane segment spans residues 48–68 (VLLGIVWTFLSCGLLLILFFL). The Cytoplasmic segment spans residues 69-86 (AFTIHCRKNRIVKMSSPN). A helical transmembrane segment spans residues 87–107 (LNIVTLLGSCLTYSSAYLFGI). Over 108–118 (QDVLVGSSMET) the chain is Extracellular. Residues 119-139 (LIQTRLSMLCIGTSLVFGPIL) form a helical membrane-spanning segment. At 140 to 164 (GKSWRLYKVFTQRVPDKRVIIKDLQ) the chain is on the cytoplasmic side. The helical transmembrane segment at 165 to 185 (LLGLVAALLMADVILLMTWVL) threads the bilayer. Residues 186 to 222 (TDPIQCLQILSVSMTVTGKDVSCTSTSTHFCASRYSD) lie on the Extracellular side of the membrane. A helical membrane pass occupies residues 223–243 (VWIALIWGCKGLLLLYGAYLA). The Cytoplasmic segment spans residues 244–257 (GLTGHVSSPPVNQS). The helical transmembrane segment at 258 to 278 (LTIMVGVNLLVLAAGLLFVVT) threads the bilayer. At 279–288 (RYLHSWPNLV) the chain is on the extracellular side. The chain crosses the membrane as a helical span at residues 289 to 309 (FGLTSGGIFVCTTTINCFIFI). The Cytoplasmic portion of the chain corresponds to 310 to 814 (PQLKQWKAFE…FKDDLKPTLV (505 aa)). A coiled-coil region spans residues 354–390 (EKSSMERLLTEKNAVIESLQEQVNNAKEKIVRLMSAE). Disordered regions lie at residues 422–545 (AQGP…SSVI), 557–724 (GLGP…PEQW), and 769–792 (SSSD…LASW). Residues 443 to 454 (SQCTSGPSSYAQ) are compositionally biased toward polar residues. Basic and acidic residues predominate over residues 468-484 (GKEEKISDSKDFSDHLD). Over residues 486–496 (GCSQKPWTEQS) the composition is skewed to polar residues. The segment covering 523–545 (QRQRHLENSEEPPERRSRVSSVI) has biased composition (basic and acidic residues). Polar residues predominate over residues 563-581 (SLSTAPSCHQQTWKNSAAF). The segment covering 599-610 (VRRRRAAQRARS) has biased composition (basic residues). The span at 639–651 (NGDSPSLAPQTTD) shows a compositional bias: polar residues. Low complexity predominate over residues 769–780 (SSSDSSDSGTSD).

This sequence belongs to the G-protein coupled receptor 3 family. GABA-B receptor subfamily. In terms of tissue distribution, ubiquitous expression both in the CNS and in peripheral tissues. Very high expression in fetal brain and testis relative to expression in other tissues.

The protein localises to the cell membrane. Its function is as follows. Orphan G-protein coupled receptor involved in the regulation of hair cell orientation in mechanosensory organs of the inner ear. It is required to trigger a 180 degree reversal in hair cell orientation, creating a virtual line of polarity reversal (LPR) across which stereociliary bundles are arranged in opposite orientations. In Homo sapiens (Human), this protein is Probable G-protein coupled receptor 156 (GPR156).